We begin with the raw amino-acid sequence, 462 residues long: GTPase Der (462 aa).

2 consecutive EngA-type G domains span residues 2 to 164 and 195 to 366; these read KKIA…PKKE and INVA…KNYS. GTP is bound by residues 8–15, 55–59, 116–119, 201–208, 248–252, and 312–315; these read GKPNVGKS, DTGGI, NKID, GRVNVGKS, DTAGI, and NKWD. The 85-residue stretch at 367 to 451 folds into the KH-like domain; that stretch reads TWLPTGQLNR…PIILRPRKRG (85 aa).

Belongs to the TRAFAC class TrmE-Era-EngA-EngB-Septin-like GTPase superfamily. EngA (Der) GTPase family. As to quaternary structure, associates with the 50S ribosomal subunit.

GTPase that plays an essential role in the late steps of ribosome biogenesis. The polypeptide is GTPase Der (Nitratiruptor sp. (strain SB155-2)).